Here is a 659-residue protein sequence, read N- to C-terminus: Alpha-galactosidase D (659 aa).

Positions 1–20 are cleaved as a signal peptide; that stretch reads MRALVPMVVAATALASPAPA. N-linked (GlcNAc...) asparagine glycans are attached at residues asparagine 48, asparagine 86, and asparagine 130. A disulfide bridge connects residues cysteine 125 and cysteine 158. The active-site Nucleophile is the aspartate 156. Asparagine 183 is a glycosylation site (N-linked (GlcNAc...) asparagine). 201-205 contributes to the substrate binding site; it reads EWGID. Aspartate 223 serves as the catalytic Proton donor. Residues asparagine 438, asparagine 450, asparagine 484, asparagine 551, and asparagine 583 are each glycosylated (N-linked (GlcNAc...) asparagine).

Belongs to the glycosyl hydrolase 27 family.

The protein resides in the secreted. It carries out the reaction Hydrolysis of terminal, non-reducing alpha-D-galactose residues in alpha-D-galactosides, including galactose oligosaccharides, galactomannans and galactolipids.. Hydrolyzes a variety of simple alpha-D-galactoside as well as more complex molecules such as oligosaccharides and polysaccharides. Active on paranitrophenyl-alpha-galactoside but not on raffinose, locust bean gum and gum guar. The protein is Alpha-galactosidase D (aglD) of Emericella nidulans (strain FGSC A4 / ATCC 38163 / CBS 112.46 / NRRL 194 / M139) (Aspergillus nidulans).